A 107-amino-acid polypeptide reads, in one-letter code: MEGKVLLCFALLLPFTVAQAAKGDTRRCGYLMMQRCRGDTTETKAWGFNYEEKKCQKETVICGTGGAPRNAFETKKDCDALCKGYSGPQYSMQEMLQHIRDNAKKTG.

The first 20 residues, 1–20 (MEGKVLLCFALLLPFTVAQA), serve as a signal peptide directing secretion. Disulfide bonds link Cys-28/Cys-82, Cys-36/Cys-62, and Cys-55/Cys-78. Residues 29–82 (GYLMMQRCRGDTTETKAWGFNYEEKKCQKETVICGTGGAPRNAFETKKDCDALC) form the BPTI/Kunitz inhibitor domain. Positions 37–39 (RGD) match the Cell attachment site motif.

The N-terminus is blocked. In terms of tissue distribution, expressed in salivary glands.

It localises to the cytoplasmic vesicle. The protein resides in the secretory vesicle. The protein localises to the secreted. Its function is as follows. Tick salivary platelet aggregation inhibitor that plays an important part in the anti-hemostatic strategy of ticks. Inhibits platelet aggregation induced by ADP (IC(50)~150 nM), collagen, and platelet activating factor (PAF). Acts by binding to platelet membrane glycoprotein IIb-IIIa (ITGA2B/ITGB3) in a metal ion dependent manner. Does not inhibit aggregation induced by ristocecin, an agonist that aggregates platelets independently from the glycoprotein IIb-IIIa (ITGA2B/ITGB3). In contrast to other tick platelet aggregation inhibitors, this protein does not protect ITGA2B/ITGB3 from dissociation under SDS condition, suggesting it may dissocate much faster than its orthologs. The polypeptide is Monogrin 2 (Argas monolakensis (Mono lake bird tick)).